A 211-amino-acid polypeptide reads, in one-letter code: BAG family molecular chaperone regulator 2 (211 aa).

Alanine 2 bears the N-acetylalanine mark. Phosphoserine is present on residues serine 20, serine 31, and serine 73. Residues 20 to 61 (SMADRSSRLLESLDQLELRVEALREAATAVEQEKEILLEMIH) are a coiled coil. Positions 109 to 189 (SLKHATRIID…NIENSDKAIK (81 aa)) constitute a BAG domain.

In terms of assembly, binds to the ATPase domain of HSP/HSC70 chaperones. May interact with NWD1. Interacts with HSPA1A (via NBD), HSPA1B (via NBD) and HSPA8. May interact with DNJC9; the interaction seems to be histone-dependent.

In terms of biological role, co-chaperone for HSP70 and HSC70 chaperone proteins. Acts as a nucleotide-exchange factor (NEF) promoting the release of ADP from the HSP70 and HSC70 proteins thereby triggering client/substrate protein release. In Homo sapiens (Human), this protein is BAG family molecular chaperone regulator 2 (BAG2).